We begin with the raw amino-acid sequence, 139 residues long: Small ribosomal subunit protein uS12 (139 aa).

Aspartate 102 bears the 3-methylthioaspartic acid mark.

It belongs to the universal ribosomal protein uS12 family. In terms of assembly, part of the 30S ribosomal subunit. Contacts proteins S8 and S17. May interact with IF1 in the 30S initiation complex.

With S4 and S5 plays an important role in translational accuracy. Its function is as follows. Interacts with and stabilizes bases of the 16S rRNA that are involved in tRNA selection in the A site and with the mRNA backbone. Located at the interface of the 30S and 50S subunits, it traverses the body of the 30S subunit contacting proteins on the other side and probably holding the rRNA structure together. The combined cluster of proteins S8, S12 and S17 appears to hold together the shoulder and platform of the 30S subunit. This chain is Small ribosomal subunit protein uS12, found in Phytoplasma australiense.